We begin with the raw amino-acid sequence, 492 residues long: Glycogen synthase 1 (492 aa).

Lysine 15 serves as a coordination point for ADP-alpha-D-glucose.

It belongs to the glycosyltransferase 1 family. Bacterial/plant glycogen synthase subfamily.

The enzyme catalyses [(1-&gt;4)-alpha-D-glucosyl](n) + ADP-alpha-D-glucose = [(1-&gt;4)-alpha-D-glucosyl](n+1) + ADP + H(+). It participates in glycan biosynthesis; glycogen biosynthesis. Its function is as follows. Synthesizes alpha-1,4-glucan chains using ADP-glucose. This Trichormus variabilis (strain ATCC 29413 / PCC 7937) (Anabaena variabilis) protein is Glycogen synthase 1.